Consider the following 193-residue polypeptide: Imidazoleglycerol-phosphate dehydratase (193 aa).

The protein belongs to the imidazoleglycerol-phosphate dehydratase family.

It localises to the cytoplasm. The catalysed reaction is D-erythro-1-(imidazol-4-yl)glycerol 3-phosphate = 3-(imidazol-4-yl)-2-oxopropyl phosphate + H2O. Its pathway is amino-acid biosynthesis; L-histidine biosynthesis; L-histidine from 5-phospho-alpha-D-ribose 1-diphosphate: step 6/9. The sequence is that of Imidazoleglycerol-phosphate dehydratase (hisB) from Saccharolobus solfataricus (strain ATCC 35092 / DSM 1617 / JCM 11322 / P2) (Sulfolobus solfataricus).